Reading from the N-terminus, the 342-residue chain is L-threonine 3-dehydrogenase (342 aa).

Cys-39 is a binding site for Zn(2+). Residues Thr-41 and His-44 each act as charge relay system in the active site. His-64, Glu-65, Cys-94, Cys-97, Cys-100, and Cys-108 together coordinate Zn(2+). NAD(+) contacts are provided by residues Ile-176, Asp-196, Arg-201, 263-265 (LGI), and 287-288 (IY).

The protein belongs to the zinc-containing alcohol dehydrogenase family. In terms of assembly, homotetramer. The cofactor is Zn(2+).

Its subcellular location is the cytoplasm. The enzyme catalyses L-threonine + NAD(+) = (2S)-2-amino-3-oxobutanoate + NADH + H(+). Its pathway is amino-acid degradation; L-threonine degradation via oxydo-reductase pathway; glycine from L-threonine: step 1/2. In terms of biological role, catalyzes the NAD(+)-dependent oxidation of L-threonine to 2-amino-3-ketobutyrate. The chain is L-threonine 3-dehydrogenase from Protochlamydia amoebophila (strain UWE25).